Here is a 181-residue protein sequence, read N- to C-terminus: ABC transporter E family member 3 (181 aa).

Residues 20-176 (SQIIVMLGEN…KAAFARFHNG (157 aa)) form the ABC transporter domain. Residue 27–34 (GENGTGKT) participates in ATP binding.

Belongs to the ABC transporter superfamily. ABCE family. As to expression, mostly expressed in roots and leaves, and, to a lower extent, in stems, flowers and siliques.

The sequence is that of ABC transporter E family member 3 (ABCE3) from Arabidopsis thaliana (Mouse-ear cress).